A 335-amino-acid polypeptide reads, in one-letter code: Nucleotide-binding protein CYA_0911 (335 aa).

20–27 contributes to the ATP binding site; the sequence is GLTGSGKT. The interval 306-335 is disordered; sequence ARFGPPPPAAGVEQQQVRIPLAGVPAPPHD.

It belongs to the RapZ-like family.

Functionally, displays ATPase and GTPase activities. The polypeptide is Nucleotide-binding protein CYA_0911 (Synechococcus sp. (strain JA-3-3Ab) (Cyanobacteria bacterium Yellowstone A-Prime)).